Consider the following 625-residue polypeptide: RecQ-mediated genome instability protein 1 (625 aa).

At Met-1 the chain carries N-acetylmethionine. Position 225 is a phosphoserine (Ser-225). The disordered stretch occupies residues 257 to 282 (LTANNDTSSERCFTTGSSSNTIPTRQ). 2 positions are modified to phosphoserine: Ser-284 and Ser-292. Residues Lys-334, Lys-387, and Lys-426 each participate in a glycyl lysine isopeptide (Lys-Gly) (interchain with G-Cter in SUMO2) cross-link.

It belongs to the RMI1 family. Component of the RMI complex, containing at least TOP3A, RMI1 and RMI2. The RMI complex interacts with BLM. Directly interacts with RMI2 and TOP3A. May bind DHJ. Interacts (via N-terminal region) with BLM; the interaction is direct.

The protein localises to the nucleus. Its function is as follows. Essential component of the RMI complex, a complex that plays an important role in the processing of homologous recombination intermediates to limit DNA crossover formation in cells. Promotes TOP3A binding to double Holliday junctions (DHJ) and hence stimulates TOP3A-mediated dissolution. Required for BLM phosphorylation during mitosis. Within the BLM complex, required for BLM and TOP3A stability. This chain is RecQ-mediated genome instability protein 1 (RMI1), found in Homo sapiens (Human).